We begin with the raw amino-acid sequence, 1217 residues long: DNA-directed RNA polymerase subunit beta' (1217 aa).

Positions 60, 62, 75, and 78 each coordinate Zn(2+). Aspartate 449, aspartate 451, and aspartate 453 together coordinate Mg(2+). 4 residues coordinate Zn(2+): cysteine 821, cysteine 895, cysteine 902, and cysteine 905.

Belongs to the RNA polymerase beta' chain family. As to quaternary structure, the RNAP catalytic core consists of 2 alpha, 1 beta, 1 beta' and 1 omega subunit. When a sigma factor is associated with the core the holoenzyme is formed, which can initiate transcription. It depends on Mg(2+) as a cofactor. Requires Zn(2+) as cofactor.

It catalyses the reaction RNA(n) + a ribonucleoside 5'-triphosphate = RNA(n+1) + diphosphate. DNA-dependent RNA polymerase catalyzes the transcription of DNA into RNA using the four ribonucleoside triphosphates as substrates. The sequence is that of DNA-directed RNA polymerase subunit beta' from Lactobacillus acidophilus (strain ATCC 700396 / NCK56 / N2 / NCFM).